A 200-amino-acid chain; its full sequence is Somatotropin (200 aa).

A signal peptide spans 1 to 22 (MARVLVLLSVVVASLLFSQGAT). Zn(2+) is bound at residue H38. The cysteines at positions 71 and 173 are disulfide-linked. Residue E182 coordinates Zn(2+). Residues C190 and C198 are joined by a disulfide bond.

This sequence belongs to the somatotropin/prolactin family.

The protein localises to the secreted. In terms of biological role, growth hormone plays an important role in growth control and is involved in the regulation of several anabolic processes. Implicated as an osmoregulatory substance important for seawater adaptation. In Ictalurus punctatus (Channel catfish), this protein is Somatotropin (gh).